A 643-amino-acid polypeptide reads, in one-letter code: Extracellular metalloproteinase 4 (643 aa).

Residues 1-18 form the signal peptide; it reads MHGLLLAGLLALPLNVLA. A propeptide spanning residues 19–254 is cleaved from the precursor; it reads HPTESHSSGI…VHSVVDYVSA (236 aa). Positions 47–57 are enriched in basic and acidic residues; sequence TKSDAVPKQDD. The segment at 47 to 71 is disordered; that stretch reads TKSDAVPKQDDESFTTSSTGDDNVS. Residues 60-71 are compositionally biased toward polar residues; the sequence is FTTSSTGDDNVS. N-linked (GlcNAc...) asparagine glycosylation is found at N271 and N420. H437 lines the Zn(2+) pocket. Residue E438 is part of the active site. Zn(2+) is bound at residue H441. N-linked (GlcNAc...) asparagine glycosylation occurs at N510.

It belongs to the peptidase M36 family. The cofactor is Zn(2+).

Its subcellular location is the secreted. Secreted metalloproteinase probably acting as a virulence factor. This is Extracellular metalloproteinase 4 (MEP4) from Trichophyton equinum (Horse ringworm fungus).